The primary structure comprises 266 residues: Undecaprenyl-diphosphatase (266 aa).

Helical transmembrane passes span 1–21 (MMSWLTIGVILGLVQGITEFL), 43–63 (ASVFEVAVQLGSIMAVVVIYW), 81–101 (LYGIWLLFLTTLPPGIIGFLF), 107–127 (TLFTIPSVIAALTTGSIFMLI), 145–165 (LTPKTALGIGFFECLALWPGF), 183–203 (HLAAEYSFIAAVPVMFAATGY), 219–239 (LFITGMICAFLAAWITIKVFI), and 245–265 (ISLRPFAYYRLLLAFIVYLCI).

The protein belongs to the UppP family.

It localises to the cell membrane. It catalyses the reaction di-trans,octa-cis-undecaprenyl diphosphate + H2O = di-trans,octa-cis-undecaprenyl phosphate + phosphate + H(+). In terms of biological role, catalyzes the dephosphorylation of undecaprenyl diphosphate (UPP). Confers resistance to bacitracin. In Lawsonia intracellularis (strain PHE/MN1-00), this protein is Undecaprenyl-diphosphatase.